The primary structure comprises 390 residues: MISNQDNIIQVSAPGKIILFGEHAVVLEKTAIASALSLRTTVTFTPNTNNTLLLDFPDLAGFGVREWSLDEFKKLDHFPNDIDILKPIECSELFQQELNKIIDIKGIHTFLFLFCALTKCTKAYNIKITSDLPIGAGLGSSASFCVSICAGLLKAFDTYICGGCKQCIGGQGQQQQICNEQLNLINLWSLQGEKIMHGTPSGIDNAVATFGKALTFTRKNGYKILENGIPPLRILITNTRVSRSTKTLVEGVIQRSKLYPTLIDPVSNLIDTISSQCIESFNQYHTDKDYEKLQQTMDLMFDMNQHLLSGCYGVGHSSIDTIVSITKSLGFHTKLTGAGGGGCVITLLKQDTTIDQLSNLKLTLSSNGFESWEATIGDPGVSINILPIQK.

Residues K16, S130, and 135–141 (GAGLGSS) contribute to the ATP site. 2 residues coordinate Mg(2+): S141 and E193. The active-site Proton acceptor is D204.

Belongs to the GHMP kinase family. Mevalonate kinase subfamily. Mg(2+) serves as cofactor.

Its subcellular location is the cytoplasm. It carries out the reaction (R)-mevalonate + ATP = (R)-5-phosphomevalonate + ADP + H(+). Its pathway is isoprenoid biosynthesis; isopentenyl diphosphate biosynthesis via mevalonate pathway; isopentenyl diphosphate from (R)-mevalonate: step 1/3. Functionally, catalyzes the phosphorylation of mevalonate to mevalonate 5-phosphate, a key step in isoprenoid biosynthesis. The chain is Mevalonate kinase from Dictyostelium discoideum (Social amoeba).